Reading from the N-terminus, the 542-residue chain is Tripartite motif-containing protein 26 (542 aa).

An RING-type zinc finger spans residues 16-57; it reads CSICLDYLRDPVTIDCGHVFCRSCTSDIRPISGNRPVCPLCK. The B box-type zinc-finger motif lies at 97–138; the sequence is QDMKLCERHQEKLHYYCEDDGKLLCVMCRESREHRPHTAVLV. 4 residues coordinate Zn(2+): cysteine 102, histidine 105, cysteine 124, and histidine 130. Positions 197-243 form a coiled coil; it reads QFLKKREQHLLDQLATLEQLLTEGREKFKTRGVSELDRLTLVISELE. Residues 298 to 542 form the B30.2/SPRY domain; the sequence is RGLRQFQGKL…WPEARLLLRP (245 aa). Residues 379 to 440 are disordered; sequence REGWSEDEEE…EEEEEVQESC (62 aa). 2 stretches are compositionally biased toward acidic residues: residues 383–405 and 413–437; these read SEDE…EEPG and WETD…EEVQ. Residues 411–440 adopt a coiled-coil conformation; that stretch reads EDWETDEEDESLGEEEEEEEEEEEEVQESC.

Belongs to the TRIM/RBCC family. Interacts with TBK1; this interaction bridges together TBK1 and NEMO in order to activate TBK1. Interacts with INCA1. Post-translationally, autoubiquitinates upon viral infection. In turn, autoubiquitinated TRIM26 recruits NEMO and bridges TBK1-NEMO interaction.

The protein localises to the cytoplasm. Its subcellular location is the nucleus. The catalysed reaction is S-ubiquitinyl-[E2 ubiquitin-conjugating enzyme]-L-cysteine + [acceptor protein]-L-lysine = [E2 ubiquitin-conjugating enzyme]-L-cysteine + N(6)-ubiquitinyl-[acceptor protein]-L-lysine.. Its function is as follows. E3 ubiquitin-protein ligase which regulates the IFN-beta production and antiviral response downstream of various DNA-encoded pattern-recognition receptors (PRRs). Also plays a central role in determining the response to different forms of oxidative stress by controlling levels of DNA glycosylases NEIL1, NEIL3 and NTH1 that are involved in repair of damaged DNA. Promotes nuclear IRF3 ubiquitination and proteasomal degradation. Bridges together TBK1 and NEMO during the innate response to viral infection leading to the activation of TBK1. Positively regulates LPS-mediated inflammatory innate immune response by catalyzing the 'Lys-11'-linked polyubiquitination of TAB1 to enhance its activation and subsequent NF-kappa-B and MAPK signaling. In a manner independent of its catalytic activity, inhibits WWP2, a SOX2-directed E3 ubiquitin ligase, and thus protects SOX2 from polyubiquitination and proteasomal degradation. Ubiquitinates the histone acetyltransferase protein complex component PHF20 and thereby triggers its degradation in the nucleus after its recruitment by the histone demethylase KDM6B, serving as a scaffold protein. Upon induction by TGF-beta, ubiquitinates the TFIID component TAF7 for proteasomal degradation. Induces ferroptosis by ubiquitinating SLC7A11, a critical protein for lipid reactive oxygen species (ROS) scavenging. This Rattus norvegicus (Rat) protein is Tripartite motif-containing protein 26 (Trim26).